The primary structure comprises 560 residues: Dihydroxy-acid dehydratase (560 aa).

Aspartate 80 provides a ligand contact to Mg(2+). Cysteine 121 contacts [2Fe-2S] cluster. The Mg(2+) site is built by aspartate 122 and lysine 123. The residue at position 123 (lysine 123) is an N6-carboxylysine. Cysteine 194 is a [2Fe-2S] cluster binding site. Glutamate 447 is a binding site for Mg(2+). The Proton acceptor role is filled by serine 473.

This sequence belongs to the IlvD/Edd family. As to quaternary structure, homodimer. It depends on [2Fe-2S] cluster as a cofactor. Mg(2+) serves as cofactor.

The catalysed reaction is (2R)-2,3-dihydroxy-3-methylbutanoate = 3-methyl-2-oxobutanoate + H2O. It carries out the reaction (2R,3R)-2,3-dihydroxy-3-methylpentanoate = (S)-3-methyl-2-oxopentanoate + H2O. It participates in amino-acid biosynthesis; L-isoleucine biosynthesis; L-isoleucine from 2-oxobutanoate: step 3/4. The protein operates within amino-acid biosynthesis; L-valine biosynthesis; L-valine from pyruvate: step 3/4. In terms of biological role, functions in the biosynthesis of branched-chain amino acids. Catalyzes the dehydration of (2R,3R)-2,3-dihydroxy-3-methylpentanoate (2,3-dihydroxy-3-methylvalerate) into 2-oxo-3-methylpentanoate (2-oxo-3-methylvalerate) and of (2R)-2,3-dihydroxy-3-methylbutanoate (2,3-dihydroxyisovalerate) into 2-oxo-3-methylbutanoate (2-oxoisovalerate), the penultimate precursor to L-isoleucine and L-valine, respectively. This is Dihydroxy-acid dehydratase from Chloroherpeton thalassium (strain ATCC 35110 / GB-78).